A 336-amino-acid chain; its full sequence is Aspartate--ammonia ligase (336 aa).

The protein belongs to the class-II aminoacyl-tRNA synthetase family. AsnA subfamily.

It is found in the cytoplasm. It catalyses the reaction L-aspartate + NH4(+) + ATP = L-asparagine + AMP + diphosphate + H(+). Its pathway is amino-acid biosynthesis; L-asparagine biosynthesis; L-asparagine from L-aspartate (ammonia route): step 1/1. This chain is Aspartate--ammonia ligase, found in Limosilactobacillus reuteri (strain DSM 20016) (Lactobacillus reuteri).